We begin with the raw amino-acid sequence, 407 residues long: Serine/threonine transporter SstT (407 aa).

The next 9 membrane-spanning stretches (helical) occupy residues 12–32 (GNLI…GISS), 42–62 (LGIL…FILI), 81–101 (IIIL…LANF), 141–161 (ALSS…GIAL), 179–199 (VLKI…GLVA), 218–238 (ILLV…IVFF), 245–267 (FPLI…SSAA), 288–308 (ISIP…IAIL), and 330–350 (IIAT…LLLI).

This sequence belongs to the dicarboxylate/amino acid:cation symporter (DAACS) (TC 2.A.23) family.

It is found in the cell inner membrane. It carries out the reaction L-serine(in) + Na(+)(in) = L-serine(out) + Na(+)(out). The catalysed reaction is L-threonine(in) + Na(+)(in) = L-threonine(out) + Na(+)(out). In terms of biological role, involved in the import of serine and threonine into the cell, with the concomitant import of sodium (symport system). The polypeptide is Serine/threonine transporter SstT (Campylobacter jejuni subsp. jejuni serotype O:23/36 (strain 81-176)).